Here is a 601-residue protein sequence, read N- to C-terminus: Putative pentatricopeptide repeat-containing protein At3g25060, mitochondrial (601 aa).

The N-terminal 80 residues, 1–80, are a transit peptide targeting the mitochondrion; that stretch reads MVQTKHFCML…KVFDELPQRG (80 aa). PPR repeat units lie at residues 49-79, 80-114, 115-149, 150-180, 181-215, 216-250, 251-281, 282-316, 317-347, 351-381, 382-416, 417-452, and 453-487; these read GSSI…LPQR, GVSV…KIQP, DSST…GYKN, DVFV…MAKR, DVIC…GFGR, DRVV…GLPM, NVVV…MMFK, TAVS…GFQP, DLVT…ILKR, DRVT…VGRK, DLVC…NIEP, DHAT…KIQP, and SEKH…NALP. A type E motif region spans residues 488-563; it reads IWVALLSGCI…VPGYSAIEVN (76 aa). Residues 564–594 form a type E(+) motif region; sequence GELRTFLMEDLSHHEHYHMLQVLRNLKTEIR.

Belongs to the PPR family. PCMP-E subfamily.

Its subcellular location is the mitochondrion. This chain is Putative pentatricopeptide repeat-containing protein At3g25060, mitochondrial (PCMP-E96), found in Arabidopsis thaliana (Mouse-ear cress).